Consider the following 322-residue polypeptide: Major serine/threonine-protein phosphatase PP2A-2 catalytic subunit (322 aa).

Mn(2+) is bound by residues D70, H72, D98, and N130. H131 acts as the Proton donor in catalysis. Mn(2+) contacts are provided by H180 and H254. Leucine methyl ester is present on L322.

The protein belongs to the PPP phosphatase family. PP-2A subfamily. The cofactor is Mn(2+).

It catalyses the reaction O-phospho-L-seryl-[protein] + H2O = L-seryl-[protein] + phosphate. The catalysed reaction is O-phospho-L-threonyl-[protein] + H2O = L-threonyl-[protein] + phosphate. Essential role in cell cycle control. PP2A may be involved in controlling the entry into mitosis, possibly acting as an inhibitor. In Schizosaccharomyces pombe (strain 972 / ATCC 24843) (Fission yeast), this protein is Major serine/threonine-protein phosphatase PP2A-2 catalytic subunit (ppa2).